The primary structure comprises 689 residues: Glycine--tRNA ligase beta subunit (689 aa).

This sequence belongs to the class-II aminoacyl-tRNA synthetase family. Tetramer of two alpha and two beta subunits.

The protein resides in the cytoplasm. It carries out the reaction tRNA(Gly) + glycine + ATP = glycyl-tRNA(Gly) + AMP + diphosphate. The polypeptide is Glycine--tRNA ligase beta subunit (Yersinia enterocolitica serotype O:8 / biotype 1B (strain NCTC 13174 / 8081)).